The sequence spans 395 residues: Elongation factor Tu (395 aa).

A tr-type G domain is found at 10 to 204 (KPHVNIGTIG…AVDSYIPTPE (195 aa)). Positions 19-26 (GHVDHGKT) are G1. 19 to 26 (GHVDHGKT) serves as a coordination point for GTP. Position 26 (threonine 26) interacts with Mg(2+). A G2 region spans residues 60 to 64 (GITIS). The interval 81–84 (DCPG) is G3. GTP-binding positions include 81–85 (DCPGH) and 136–139 (NKCD). Positions 136 to 139 (NKCD) are G4. Residues 174-176 (SAL) form a G5 region.

The protein belongs to the TRAFAC class translation factor GTPase superfamily. Classic translation factor GTPase family. EF-Tu/EF-1A subfamily. As to quaternary structure, monomer.

It is found in the cytoplasm. It carries out the reaction GTP + H2O = GDP + phosphate + H(+). In terms of biological role, GTP hydrolase that promotes the GTP-dependent binding of aminoacyl-tRNA to the A-site of ribosomes during protein biosynthesis. This Listeria monocytogenes serotype 4b (strain CLIP80459) protein is Elongation factor Tu.